A 180-amino-acid polypeptide reads, in one-letter code: uncharacterized protein (180 aa).

An N-terminal signal peptide occupies residues 1–22 (MKLRFISSALAAALFAATGSYA). A disulfide bridge links Cys-41 with Cys-81.

Belongs to the fimbrial protein family.

The protein localises to the fimbrium. This is an uncharacterized protein from Escherichia coli O157:H7.